The following is a 388-amino-acid chain: Succinate--CoA ligase [ADP-forming] subunit beta (388 aa).

The ATP-grasp domain occupies 9–244; it reads KQLFARYGLP…PSQEDSREAH (236 aa). Residues lysine 46, 53 to 55, glutamate 99, threonine 102, and glutamate 107 each bind ATP; that span reads GRG. Residues asparagine 199 and aspartate 213 each coordinate Mg(2+). Substrate-binding positions include asparagine 264 and 321-323; that span reads GIV.

Belongs to the succinate/malate CoA ligase beta subunit family. In terms of assembly, heterotetramer of two alpha and two beta subunits. The cofactor is Mg(2+).

The enzyme catalyses succinate + ATP + CoA = succinyl-CoA + ADP + phosphate. It catalyses the reaction GTP + succinate + CoA = succinyl-CoA + GDP + phosphate. It functions in the pathway carbohydrate metabolism; tricarboxylic acid cycle; succinate from succinyl-CoA (ligase route): step 1/1. In terms of biological role, succinyl-CoA synthetase functions in the citric acid cycle (TCA), coupling the hydrolysis of succinyl-CoA to the synthesis of either ATP or GTP and thus represents the only step of substrate-level phosphorylation in the TCA. The beta subunit provides nucleotide specificity of the enzyme and binds the substrate succinate, while the binding sites for coenzyme A and phosphate are found in the alpha subunit. This Erwinia tasmaniensis (strain DSM 17950 / CFBP 7177 / CIP 109463 / NCPPB 4357 / Et1/99) protein is Succinate--CoA ligase [ADP-forming] subunit beta.